The sequence spans 249 residues: Leucyl/phenylalanyl-tRNA--protein transferase (249 aa).

A disordered region spans residues 1–21 (MSRTLPHLLSPDPASPFPPAE).

It belongs to the L/F-transferase family.

Its subcellular location is the cytoplasm. The catalysed reaction is N-terminal L-lysyl-[protein] + L-leucyl-tRNA(Leu) = N-terminal L-leucyl-L-lysyl-[protein] + tRNA(Leu) + H(+). It catalyses the reaction N-terminal L-arginyl-[protein] + L-leucyl-tRNA(Leu) = N-terminal L-leucyl-L-arginyl-[protein] + tRNA(Leu) + H(+). The enzyme catalyses L-phenylalanyl-tRNA(Phe) + an N-terminal L-alpha-aminoacyl-[protein] = an N-terminal L-phenylalanyl-L-alpha-aminoacyl-[protein] + tRNA(Phe). Its function is as follows. Functions in the N-end rule pathway of protein degradation where it conjugates Leu, Phe and, less efficiently, Met from aminoacyl-tRNAs to the N-termini of proteins containing an N-terminal arginine or lysine. This is Leucyl/phenylalanyl-tRNA--protein transferase from Xanthomonas campestris pv. campestris (strain B100).